Reading from the N-terminus, the 387-residue chain is MNDRLDLLPAPFDLEGHLAPYAAHAAQSRGRVHAEPPSTSRTEFQRDRDRIIHCTAFRRLEYKTQVFVNHEGDLFRTRLTHSLEVAQIARSIARSLRLNEDLVEAISLAHDLGHTPFGHAGQDALNDCMKPYGGFEHNLQSLLVVDRLEERYGGFDGLNLTFETREGILKHCSRNNAATLGDLGRRFLEGQQPSLEAQLANLADEVAYNNHDIDDGLRSGLITLEQLEGVPLWARHRREAEAAFPGVGGRRMINETIRRIINALIVDLIAGTRAAITGAAPQSIDDVRAAPPLVAFSEPMRDEARVLKRFLFDNLYRHYLVMRMAAKARRIIEDLFRVFLEDPRLLPPQYQARDPADQPRWIAHYIAGMTDRYAIKEHRRIFAVEVL.

An HD domain is found at 78 to 209 (RLTHSLEVAQ…ANLADEVAYN (132 aa)).

It belongs to the dGTPase family. Type 2 subfamily.

The chain is Deoxyguanosinetriphosphate triphosphohydrolase-like protein from Ralstonia nicotianae (strain ATCC BAA-1114 / GMI1000) (Ralstonia solanacearum).